The following is a 229-amino-acid chain: UPF0758 protein Fjoh_0413 (229 aa).

The 123-residue stretch at 107–229 folds into the MPN domain; sequence KITSSKDAFT…YYSFVDEGIF (123 aa). 3 residues coordinate Zn(2+): His178, His180, and Asp191. The JAMM motif motif lies at 178 to 191; that stretch reads HNHPSGELNPSQAD.

Belongs to the UPF0758 family.

The polypeptide is UPF0758 protein Fjoh_0413 (Flavobacterium johnsoniae (strain ATCC 17061 / DSM 2064 / JCM 8514 / BCRC 14874 / CCUG 350202 / NBRC 14942 / NCIMB 11054 / UW101) (Cytophaga johnsonae)).